A 373-amino-acid polypeptide reads, in one-letter code: tRNA-specific 2-thiouridylase MnmA (373 aa).

ATP-binding positions include 12-19 (GMSGGVDS) and M38. Residues 98-100 (NPD) form an interaction with target base in tRNA region. C103 acts as the Nucleophile in catalysis. Cysteines 103 and 200 form a disulfide. G127 is an ATP binding site. Residues 150–152 (KDQ) are interaction with tRNA. The Cysteine persulfide intermediate role is filled by C200. The interval 312 to 313 (RY) is interaction with tRNA.

It belongs to the MnmA/TRMU family.

It is found in the cytoplasm. The catalysed reaction is S-sulfanyl-L-cysteinyl-[protein] + uridine(34) in tRNA + AH2 + ATP = 2-thiouridine(34) in tRNA + L-cysteinyl-[protein] + A + AMP + diphosphate + H(+). Catalyzes the 2-thiolation of uridine at the wobble position (U34) of tRNA, leading to the formation of s(2)U34. The protein is tRNA-specific 2-thiouridylase MnmA of Streptococcus pyogenes serotype M28 (strain MGAS6180).